We begin with the raw amino-acid sequence, 347 residues long: MERTIKGVCDGENGEGVRNCHCVVALSGGADSTALLLILHYLRQRLGLSLSALHVDHGLRPESAAEARAAVTFCHALGIPLAVHTLTVDELAAVWRVGTEEAGRKARYDLLAAALPSPAADWICTGHHLGDLAEDVLMRLVRGCGWPALGGMRLCDPARRILRPLLLTEKDRLEAFLATLGVSWTEDPSNASDTYLRNRMRHGVIPLLTAENPGFLDQVRDLWQLAHIDADFWETRTAATLSAAPASPSHVEGEASAPHDAAHGAESIRLPKTTLTGLHQAERLRLFKEVLRRMGEGQARAETLLALDAAWVAGRGGTRFMFAGCKTATVRRGDIIFSGGPPAEDTP.

Residue 27–32 coordinates ATP; it reads SGGADS. The interval 243-263 is disordered; that stretch reads AAPASPSHVEGEASAPHDAAH.

It belongs to the tRNA(Ile)-lysidine synthase family.

It localises to the cytoplasm. The catalysed reaction is cytidine(34) in tRNA(Ile2) + L-lysine + ATP = lysidine(34) in tRNA(Ile2) + AMP + diphosphate + H(+). In terms of biological role, ligates lysine onto the cytidine present at position 34 of the AUA codon-specific tRNA(Ile) that contains the anticodon CAU, in an ATP-dependent manner. Cytidine is converted to lysidine, thus changing the amino acid specificity of the tRNA from methionine to isoleucine. The chain is tRNA(Ile)-lysidine synthase from Nitratidesulfovibrio vulgaris (strain ATCC 29579 / DSM 644 / CCUG 34227 / NCIMB 8303 / VKM B-1760 / Hildenborough) (Desulfovibrio vulgaris).